We begin with the raw amino-acid sequence, 199 residues long: Small ribosomal subunit protein uS4B (199 aa).

In terms of domain architecture, S4 RNA-binding spans 88–151; sequence CRLDNLVYRT…RKNKIFIDNF (64 aa).

This sequence belongs to the universal ribosomal protein uS4 family. In terms of assembly, part of the 30S ribosomal subunit. Contacts protein S5. The interaction surface between S4 and S5 is involved in control of translational fidelity.

Functionally, one of the primary rRNA binding proteins, it binds directly to 16S rRNA where it nucleates assembly of the body of the 30S subunit. In terms of biological role, with S5 and S12 plays an important role in translational accuracy. This is Small ribosomal subunit protein uS4B from Alkaliphilus metalliredigens (strain QYMF).